A 300-amino-acid chain; its full sequence is Cation-efflux pump FieF (300 aa).

4 helical membrane passes run 12–32 (AAIA…FAWW), 39–59 (ILAA…NLLV), 82–102 (AALA…LTGI), and 114–134 (PGVG…LVSF). Positions 45 and 49 each coordinate Zn(2+). 2 residues coordinate Zn(2+): His153 and Asp157. The next 2 membrane-spanning stretches (helical) occupy residues 156-176 (SDVM…YGWH) and 178-198 (ADAL…LRMG).

This sequence belongs to the cation diffusion facilitator (CDF) transporter (TC 2.A.4) family. FieF subfamily. As to quaternary structure, homodimer.

Its subcellular location is the cell inner membrane. The catalysed reaction is Zn(2+)(in) + H(+)(out) = Zn(2+)(out) + H(+)(in). It carries out the reaction Cd(2+)(in) + H(+)(out) = Cd(2+)(out) + H(+)(in). The enzyme catalyses Fe(2+)(in) + H(+)(out) = Fe(2+)(out) + H(+)(in). Its function is as follows. Divalent metal cation transporter which exports Zn(2+), Cd(2+) and possibly Fe(2+). May be involved in zinc and iron detoxification by efflux. This chain is Cation-efflux pump FieF, found in Escherichia coli O127:H6 (strain E2348/69 / EPEC).